The following is a 1463-amino-acid chain: Collagen alpha-1(I) chain (1463 aa).

Residues 1 to 22 (MFSFVDLRLLLLLAATALLTHG) form the signal peptide. Positions 23–161 (QEEGQEEGQE…PPGLGGNFAP (139 aa)) are cleaved as a propeptide — N-terminal propeptide. Positions 38–96 (VTCVQNGLRYHDRDVWKPVPCQICVCDNGNVLCDDVICDELKDCPNAKVPTDECCPVCP) constitute a VWFC domain. The interval 98–1217 (GQESPTDQET…AHDGGRYYRA (1120 aa)) is disordered. Pro residues predominate over residues 138–153 (PGLPGPPGPPGPPGPP). Residue Gln-162 is modified to Pyrrolidone carboxylic acid. Residues 162–177 (QLSYGYDEKSTGISVP) are nonhelical region (N-terminal). Residue Lys-170 is modified to Allysine. Position 171 is a phosphoserine (Ser-171). Positions 178–1191 (GPMGPSGPRG…PGPPGPPGPP (1014 aa)) are triple-helical region. 11 positions are modified to 4-hydroxyproline: Pro-189, Pro-192, Pro-195, Pro-204, Pro-207, Pro-210, Pro-225, Pro-240, Pro-246, Pro-255, and Pro-261. The span at 197–216 (PQGFQGPPGEPGEPGASGPM) shows a compositional bias: low complexity. Positions 228–242 (NGDDGEAGKPGRPGE) are enriched in basic and acidic residues. Lys-264 bears the 5-hydroxylysine; alternate mark. Lys-264 carries an O-linked (Gal...) hydroxylysine; alternate glycan. Ser-270 carries the phosphoserine modification. 5-hydroxylysine is present on residues Lys-276 and Lys-285. The span at 278–294 (DAGPAGPKGEPGSPGEN) shows a compositional bias: low complexity. 4-hydroxyproline occurs at positions 288, 291, 297, 306, and 312. Over residues 317–330 (PAGARGNDGATGAA) the composition is skewed to low complexity. The span at 332-344 (PPGPTGPAGPPGF) shows a compositional bias: pro residues. Pro-333, Pro-342, and Pro-345 each carry 4-hydroxyproline. Positions 349–358 (GAKGEGGPQG) are enriched in gly residues. A 4-hydroxyproline mark is found at Pro-372, Pro-375, Pro-387, Pro-393, Pro-402, Pro-408, Pro-411, and Pro-426. The span at 378–417 (AGAAGPAGNPGADGQPGAKGANGAPGIAGAPGFPGARGPS) shows a compositional bias: low complexity. Residue Lys-429 is modified to 5-hydroxylysine. 8 positions are modified to 4-hydroxyproline: Pro-435, Pro-438, Pro-450, Pro-459, Pro-474, Pro-480, Pro-489, and Pro-495. Over residues 484 to 493 (GERGGPGSRG) the composition is skewed to gly residues. The segment covering 494 to 525 (FPGADGVAGPKGPAGERGAPGPAGPKGSPGEA) has biased composition (low complexity). Lys-504 carries the 5-hydroxylysine modification. Pro-513, Pro-522, Pro-528, Pro-534, Pro-543, Pro-546, Pro-555, Pro-564, Pro-570, Pro-582, Pro-591, Pro-600, Pro-603, Pro-621, Pro-639, Pro-645, Pro-651, Pro-657, Pro-663, Pro-669, Pro-681, Pro-690, Pro-702, Pro-714, Pro-717, Pro-723, Pro-729, and Pro-738 each carry 4-hydroxyproline. The segment covering 537-563 (KGLTGSPGSPGPDGKTGPPGPAGQDGR) has biased composition (low complexity). Low complexity predominate over residues 572–591 (ARGQAGVMGFPGPKGAAGEP). Residues 633-660 (QGPAGSPGFQGLPGPAGPPGEAGKPGEQ) show a composition bias toward low complexity. The span at 695 to 723 (PRGANGAPGNDGAKGDAGAPGAPGSQGAP) shows a compositional bias: low complexity. A Cell attachment site motif is present at residues 744–746 (RGD). The residue at position 750 (Lys-750) is a 5-hydroxylysine. 4-hydroxyproline occurs at positions 756, 771, and 777. Positions 783–797 (AGPSGPAGPTGARGA) are enriched in low complexity. The residue at position 786 (Ser-786) is a Phosphoserine. 4-hydroxyproline is present on residues Pro-798, Pro-804, Pro-807, Pro-816, Pro-822, Pro-840, Pro-849, and Pro-858. Low complexity predominate over residues 810-837 (AGFAGPPGADGQPGAKGEPGDAGAKGDA). Over residues 839 to 851 (PPGPAGPAGPPGP) the composition is skewed to pro residues. Over residues 852-882 (IGNVGAPGPKGARGSAGPPGATGFPGAAGRV) the composition is skewed to low complexity. Residue Lys-861 is modified to 5-hydroxylysine. 2 positions are modified to 4-hydroxyproline: Pro-870 and Pro-876. Pro-884 is subject to 3-hydroxyproline. A 4-hydroxyproline mark is found at Pro-885, Pro-894, Pro-897, Pro-918, Pro-927, Pro-936, Pro-945, Pro-963, Pro-972, Pro-975, Pro-981, Pro-996, Pro-1002, Pro-1008, Pro-1017, and Pro-1023. Over residues 930–954 (AGEKGAPGADGPAGAPGTPGPQGIA) the composition is skewed to low complexity. Positions 995 to 1005 (PPGPMGPPGLA) are enriched in pro residues. Lys-1032 carries the 5-hydroxylysine modification. The segment covering 1041-1056 (AGPPGAPGAPGAPGPV) has biased composition (pro residues). Residues Pro-1044, Pro-1047, and Pro-1050 each carry the 4-hydroxyproline modification. Residues 1077–1091 (IGPVGARGPAGPQGP) are compositionally biased toward low complexity. The Cell attachment site signature appears at 1092 to 1094 (RGD). The span at 1092–1106 (RGDKGETGEQGDRGI) shows a compositional bias: basic and acidic residues. Residue Lys-1095 is modified to 5-hydroxylysine. Lys-1107 is subject to 5-hydroxylysine; alternate. An O-linked (Gal...) hydroxylysine; alternate glycan is attached at Lys-1107. Residues Pro-1119, Pro-1122, Pro-1125, Pro-1143, and Pro-1158 each carry the 4-hydroxyproline modification. A compositionally biased stretch (low complexity) spans 1125-1149 (PGEQGPSGASGPAGPRGPPGSAGSP). The residue at position 1163 (Pro-1163) is a 3-hydroxyproline. Pro-1164 is subject to 4-hydroxyproline. The segment covering 1176–1191 (AGPPGPPGPPGPPGPP) has biased composition (pro residues). A 3-hydroxyproline modification is found at Pro-1178. Position 1179 is a 4-hydroxyproline (Pro-1179). Residue Pro-1181 is modified to 3-hydroxyproline. Pro-1182 carries the post-translational modification 4-hydroxyproline. Pro-1184 bears the 3-hydroxyproline mark. 3 positions are modified to 4-hydroxyproline: Pro-1185, Pro-1188, and Pro-1191. The tract at residues 1192-1215 (SGGYDLSFLPQPPQEKAHDGGRYY) is nonhelical region (C-terminal). The span at 1206–1217 (EKAHDGGRYYRA) shows a compositional bias: basic and acidic residues. Lys-1207 carries the allysine modification. The propeptide at 1218–1463 (DDANVVRDRD…GFDVGPACFL (246 aa)) is C-terminal propeptide. The region spanning 1228 to 1463 (LEVDTTLKSL…GFDVGPACFL (236 aa)) is the Fibrillar collagen NC1 domain. 3 disulfides stabilise this stretch: Cys-1258–Cys-1290, Cys-1298–Cys-1461, and Cys-1369–Cys-1414. Asp-1276, Asn-1278, Gln-1279, Cys-1281, and Asp-1284 together coordinate Ca(2+).

This sequence belongs to the fibrillar collagen family. As to quaternary structure, trimers of one alpha 2(I) and two alpha 1(I) chains. Interacts with MRC2. Interacts with TRAM2. Interacts with MFAP4 in a Ca (2+)-dependent manner. In terms of processing, contains mostly 4-hydroxyproline. Proline residues at the third position of the tripeptide repeating unit (G-X-Y) are hydroxylated in some or all of the chains. Post-translationally, contains 3-hydroxyproline at a few sites. This modification occurs on the first proline residue in the sequence motif Gly-Pro-Hyp, where Hyp is 4-hydroxyproline. Lysine residues at the third position of the tripeptide repeating unit (G-X-Y) are 5-hydroxylated in some or all of the chains. In terms of processing, O-glycosylated on hydroxylated lysine residues. The O-linked glycan consists of a Glc-Gal disaccharide. As to expression, forms the fibrils of tendon, ligaments and bones. In bones the fibrils are mineralized with calcium hydroxyapatite.

It is found in the secreted. It localises to the extracellular space. The protein localises to the extracellular matrix. Type I collagen is a member of group I collagen (fibrillar forming collagen). This is Collagen alpha-1(I) chain (COL1A1) from Bos taurus (Bovine).